The chain runs to 447 residues: N-succinylarginine dihydrolase (447 aa).

Substrate is bound by residues 19–28 (AGLSFGNEAS), Asn-110, and 137–138 (HR). Residue Glu-174 is part of the active site. Residue Arg-212 participates in substrate binding. His-248 is a catalytic residue. Substrate is bound by residues Asp-250 and Asn-359. Catalysis depends on Cys-365, which acts as the Nucleophile.

Belongs to the succinylarginine dihydrolase family. In terms of assembly, homodimer.

It carries out the reaction N(2)-succinyl-L-arginine + 2 H2O + 2 H(+) = N(2)-succinyl-L-ornithine + 2 NH4(+) + CO2. It participates in amino-acid degradation; L-arginine degradation via AST pathway; L-glutamate and succinate from L-arginine: step 2/5. Its function is as follows. Catalyzes the hydrolysis of N(2)-succinylarginine into N(2)-succinylornithine, ammonia and CO(2). In Escherichia coli (strain SMS-3-5 / SECEC), this protein is N-succinylarginine dihydrolase.